The chain runs to 180 residues: Acireductone dioxygenase (180 aa).

Positions 97, 99, 103, and 141 each coordinate Fe(2+). Ni(2+) is bound by residues histidine 97, histidine 99, glutamate 103, and histidine 141.

This sequence belongs to the acireductone dioxygenase (ARD) family. In terms of assembly, monomer. The cofactor is Fe(2+). It depends on Ni(2+) as a cofactor.

It catalyses the reaction 1,2-dihydroxy-5-(methylsulfanyl)pent-1-en-3-one + O2 = 3-(methylsulfanyl)propanoate + CO + formate + 2 H(+). It carries out the reaction 1,2-dihydroxy-5-(methylsulfanyl)pent-1-en-3-one + O2 = 4-methylsulfanyl-2-oxobutanoate + formate + 2 H(+). Its pathway is amino-acid biosynthesis; L-methionine biosynthesis via salvage pathway; L-methionine from S-methyl-5-thio-alpha-D-ribose 1-phosphate: step 5/6. Functionally, catalyzes 2 different reactions between oxygen and the acireductone 1,2-dihydroxy-3-keto-5-methylthiopentene (DHK-MTPene) depending upon the metal bound in the active site. Fe-containing acireductone dioxygenase (Fe-ARD) produces formate and 2-keto-4-methylthiobutyrate (KMTB), the alpha-ketoacid precursor of methionine in the methionine recycle pathway. Ni-containing acireductone dioxygenase (Ni-ARD) produces methylthiopropionate, carbon monoxide and formate, and does not lie on the methionine recycle pathway. This chain is Acireductone dioxygenase, found in Acidiphilium cryptum (strain JF-5).